The following is a 330-amino-acid chain: DNA-directed RNA polymerase subunit alpha (330 aa).

Residues 1–229 (MKNLKFIKPF…DHFNVLVELS (229 aa)) are alpha N-terminal domain (alpha-NTD). The tract at residues 245–330 (AHNYVLDLEI…HSVEEDKDKH (86 aa)) is alpha C-terminal domain (alpha-CTD).

This sequence belongs to the RNA polymerase alpha chain family. Homodimer. The RNAP catalytic core consists of 2 alpha, 1 beta, 1 beta' and 1 omega subunit. When a sigma factor is associated with the core the holoenzyme is formed, which can initiate transcription.

The enzyme catalyses RNA(n) + a ribonucleoside 5'-triphosphate = RNA(n+1) + diphosphate. Its function is as follows. DNA-dependent RNA polymerase catalyzes the transcription of DNA into RNA using the four ribonucleoside triphosphates as substrates. This Aster yellows witches'-broom phytoplasma (strain AYWB) protein is DNA-directed RNA polymerase subunit alpha.